The primary structure comprises 152 residues: UPF0178 protein Shewmr7_1635 (152 aa).

It belongs to the UPF0178 family.

This chain is UPF0178 protein Shewmr7_1635, found in Shewanella sp. (strain MR-7).